Reading from the N-terminus, the 633-residue chain is Chaperone protein HtpG (633 aa).

The tract at residues 1–345 is a; substrate-binding; that stretch reads MSADTQSETL…SDDLPLNISR (345 aa). The segment at 346-562 is b; sequence EMLQHNPMIS…EYDFGMGMQR (217 aa). Residues 563-633 are c; the sequence is LLQAAGHQLP…VRRVNNLLAG (71 aa).

It belongs to the heat shock protein 90 family. Homodimer.

It localises to the cytoplasm. In terms of biological role, molecular chaperone. Has ATPase activity. The sequence is that of Chaperone protein HtpG from Halorhodospira halophila (strain DSM 244 / SL1) (Ectothiorhodospira halophila (strain DSM 244 / SL1)).